Reading from the N-terminus, the 553-residue chain is Terpene synthase 16 (553 aa).

Residues D303, D307, and E457 each contribute to the Mg(2+) site. Residues 303-307 (DDTYD) carry the DDXXD motif motif.

Belongs to the terpene synthase family. Tpsa subfamily. The cofactor is Mg(2+). It depends on Mn(2+) as a cofactor. As to expression, expressed in leaves, trichomes and flowers.

Its pathway is secondary metabolite biosynthesis; terpenoid biosynthesis. Functionally, sesquiterpene synthase involved in the biosynthesis of volatile compounds. No activity detected with geranyl diphosphate (GPP) and farnesyl diphosphate (FPP) as substrates. This Solanum lycopersicum (Tomato) protein is Terpene synthase 16.